Reading from the N-terminus, the 205-residue chain is Protein-L-isoaspartate O-methyltransferase (205 aa).

Residue Ser-56 is part of the active site.

Belongs to the methyltransferase superfamily. L-isoaspartyl/D-aspartyl protein methyltransferase family.

It is found in the cytoplasm. It catalyses the reaction [protein]-L-isoaspartate + S-adenosyl-L-methionine = [protein]-L-isoaspartate alpha-methyl ester + S-adenosyl-L-homocysteine. In terms of biological role, catalyzes the methyl esterification of L-isoaspartyl residues in peptides and proteins that result from spontaneous decomposition of normal L-aspartyl and L-asparaginyl residues. It plays a role in the repair and/or degradation of damaged proteins. In Pyrobaculum arsenaticum (strain DSM 13514 / JCM 11321 / PZ6), this protein is Protein-L-isoaspartate O-methyltransferase.